Consider the following 441-residue polypeptide: Histidine--tRNA ligase (441 aa).

It belongs to the class-II aminoacyl-tRNA synthetase family. Homodimer.

The protein localises to the cytoplasm. It carries out the reaction tRNA(His) + L-histidine + ATP = L-histidyl-tRNA(His) + AMP + diphosphate + H(+). In Synechococcus sp. (strain WH7803), this protein is Histidine--tRNA ligase.